The chain runs to 107 residues: Putative septation protein SpoVG (107 aa).

The disordered stretch occupies residues 82-107 (ETDEVIPDKNAQPSSDSEDNGSEEEA). Positions 97-107 (DSEDNGSEEEA) are enriched in acidic residues.

The protein belongs to the SpoVG family.

Its function is as follows. Could be involved in septation. In Staphylococcus carnosus (strain TM300), this protein is Putative septation protein SpoVG.